A 269-amino-acid polypeptide reads, in one-letter code: Glutamate racemase (269 aa).

Residues 7-8 and 39-40 each bind substrate; these read DS and YG. Cys70 acts as the Proton donor/acceptor in catalysis. 71 to 72 is a substrate binding site; that stretch reads NT. Cys194 serves as the catalytic Proton donor/acceptor. Position 195-196 (195-196) interacts with substrate; sequence TH.

The protein belongs to the aspartate/glutamate racemases family.

It carries out the reaction L-glutamate = D-glutamate. Its pathway is cell wall biogenesis; peptidoglycan biosynthesis. In terms of biological role, provides the (R)-glutamate required for cell wall biosynthesis. This chain is Glutamate racemase, found in Ruegeria pomeroyi (strain ATCC 700808 / DSM 15171 / DSS-3) (Silicibacter pomeroyi).